The chain runs to 376 residues: Queuine tRNA-ribosyltransferase (376 aa).

Asp89 (proton acceptor) is an active-site residue. Substrate-binding positions include 89 to 93 (DSGGF), Asp143, Gln194, and Gly221. The segment at 252–258 (GVGTPSN) is RNA binding. Residue Asp271 is the Nucleophile of the active site. The segment at 276–280 (ARNGR) is RNA binding; important for wobble base 34 recognition. Cys309, Cys311, Cys314, and His340 together coordinate Zn(2+).

This sequence belongs to the queuine tRNA-ribosyltransferase family. In terms of assembly, homodimer. Within each dimer, one monomer is responsible for RNA recognition and catalysis, while the other monomer binds to the replacement base PreQ1. Requires Zn(2+) as cofactor.

It carries out the reaction 7-aminomethyl-7-carbaguanine + guanosine(34) in tRNA = 7-aminomethyl-7-carbaguanosine(34) in tRNA + guanine. It functions in the pathway tRNA modification; tRNA-queuosine biosynthesis. Catalyzes the base-exchange of a guanine (G) residue with the queuine precursor 7-aminomethyl-7-deazaguanine (PreQ1) at position 34 (anticodon wobble position) in tRNAs with GU(N) anticodons (tRNA-Asp, -Asn, -His and -Tyr). Catalysis occurs through a double-displacement mechanism. The nucleophile active site attacks the C1' of nucleotide 34 to detach the guanine base from the RNA, forming a covalent enzyme-RNA intermediate. The proton acceptor active site deprotonates the incoming PreQ1, allowing a nucleophilic attack on the C1' of the ribose to form the product. After dissociation, two additional enzymatic reactions on the tRNA convert PreQ1 to queuine (Q), resulting in the hypermodified nucleoside queuosine (7-(((4,5-cis-dihydroxy-2-cyclopenten-1-yl)amino)methyl)-7-deazaguanosine). The protein is Queuine tRNA-ribosyltransferase of Clostridium acetobutylicum (strain ATCC 824 / DSM 792 / JCM 1419 / IAM 19013 / LMG 5710 / NBRC 13948 / NRRL B-527 / VKM B-1787 / 2291 / W).